A 1767-amino-acid polypeptide reads, in one-letter code: Endo-alpha-N-acetylgalactosaminidase (1767 aa).

An N-terminal signal peptide occupies residues 1–39; that stretch reads MNKGLFEKRCKYSIRKFSLGVASVMIGAAFFGTSPVLAD. Composition is skewed to basic and acidic residues over residues 61 to 75 and 84 to 111; these read KENDGRDFEAPKVGE and DGPKTEEELLALEKEKPAEEKPKEDKPA. Disordered stretches follow at residues 61–124 and 301–324; these read KEND…VTPE and VKTDNQEGVKTEDTPAEKETGPEV. Residues 112–124 are compositionally biased toward low complexity; it reads AAKPETPKTVTPE. Over residues 304–324 the composition is skewed to basic and acidic residues; sequence DNQEGVKTEDTPAEKETGPEV. Ca(2+)-binding residues include Asp577, Asn579, Asp581, Asn583, and Asp588. The tract at residues 602–893 is catalytic; that stretch reads GWEKVKDITA…DVMTKYFQHF (292 aa). Residue Asp658 coordinates substrate. Catalysis depends on Asp764, which acts as the Nucleophile. Glu796 serves as the catalytic Proton donor/acceptor. Ca(2+) contacts are provided by Asp1233, Glu1235, Glu1281, Trp1284, and Asp1411. The tract at residues 1711-1730 is disordered; it reads LASEQGKTPDYKQEIARPET. The span at 1717 to 1730 shows a compositional bias: basic and acidic residues; it reads KTPDYKQEIARPET. The LPXTG sorting signal signature appears at 1735 to 1739; that stretch reads LPATG. The residue at position 1738 (Thr1738) is a Pentaglycyl murein peptidoglycan amidated threonine. A propeptide spans 1739–1767 (removed by sortase); the sequence is GESQSDTALILASVSLALSALFVVKTKKD.

The protein belongs to the glycosyl hydrolase 101 family. A subfamily.

Its subcellular location is the secreted. The protein localises to the cell wall. It carries out the reaction a 3-O-[beta-D-galactosyl-(1-&gt;3)-N-acetyl-alpha-D-galactosaminyl]-L-threonyl-[protein] + H2O = beta-D-galactosyl-(1-&gt;3)-N-acetyl-D-galactosamine + L-threonyl-[protein]. The enzyme catalyses a 3-O-[beta-D-galactosyl-(1-&gt;3)-N-acetyl-alpha-D-galactosaminyl]-L-seryl-[protein] + H2O = beta-D-galactosyl-(1-&gt;3)-N-acetyl-D-galactosamine + L-seryl-[protein]. Involved in the breakdown of mucin-type O-linked glycans. Specifically removes the T-antigen disaccharide (Gal-beta-1,3-GalNAc-alpha) from extracellular host glycoproteins. Representative of a broadly important class of virulence factors. This chain is Endo-alpha-N-acetylgalactosaminidase, found in Streptococcus pneumoniae serotype 4 (strain ATCC BAA-334 / TIGR4).